The sequence spans 393 residues: Pyrimidine monooxygenase RutA (393 aa).

FMN is bound by residues Ile79 to Lys80, Asn145, Glu154, Arg170 to Tyr171, and Ser220.

Belongs to the NtaA/SnaA/DszA monooxygenase family. RutA subfamily.

The enzyme catalyses uracil + FMNH2 + NADH + O2 = (Z)-3-ureidoacrylate + FMN + NAD(+) + H2O + H(+). The catalysed reaction is thymine + FMNH2 + NADH + O2 = (Z)-2-methylureidoacrylate + FMN + NAD(+) + H2O + H(+). Its function is as follows. Catalyzes the pyrimidine ring opening between N-3 and C-4 by an unusual flavin hydroperoxide-catalyzed mechanism, adding oxygen atoms in the process to yield ureidoacrylate peracid, that immediately reacts with FMN forming ureidoacrylate and FMN-N(5)-oxide. The FMN-N(5)-oxide reacts spontaneously with NADH to produce FMN. Requires the flavin reductase RutF to regenerate FMN in vivo. This Escherichia coli O9:H4 (strain HS) protein is Pyrimidine monooxygenase RutA.